The sequence spans 821 residues: KN motif and ankyrin repeat domain-containing protein 3 (821 aa).

Residues 1 to 10 show a composition bias toward polar residues; the sequence is MAKFALNQNL. Disordered stretches follow at residues 1-36, 58-184, 224-333, and 385-547; these read MAKF…PYSV, GPAA…AQLQ, LLAG…APET, and AAEE…GRCE. Residues 77–88 are compositionally biased toward low complexity; sequence RPGLAGARSPGA. The span at 128–150 shows a compositional bias: basic and acidic residues; it reads PRVEHTLRETSRRLELAQTHERA. Over residues 151 to 181 the composition is skewed to low complexity; the sequence is PSPGRGVPRSPRGSGRSSPAPNLAPASPGPA. Residues serine 152, serine 160, serine 164, serine 167, serine 168, and serine 177 each carry the phosphoserine modification. Positions 181–230 form a coiled coil; the sequence is AQLQLVREQMAAALRRLRELEDQARTLPELQEQVRALRAEKARLLAGRAQ. A compositionally biased stretch (basic and acidic residues) spans 237–261; sequence AETRPDKLAQLRRLTERLATSERGG. Phosphoserine is present on residues serine 271, serine 280, and serine 293. Residues 367 to 404 are a coiled coil; the sequence is GVSELLRGRLRELEEAREAAEEAAAGARAQLREATTQT. Composition is skewed to low complexity over residues 388–400 and 494–507; these read EAAA…LREA and NGGA…SGSG. 5 ANK repeats span residues 622-652, 656-690, 695-724, 728-758, and 762-785; these read NGNT…EVNR, AGYS…DVNA, TGQT…DVNA, DGAT…DPAI, and EGTS…LHAH. A disordered region spans residues 784–821; that stretch reads AHLSSGQPDTQSESPPGSQTATPGEGECGDNGENPQVQ. Residues 787–805 show a composition bias toward polar residues; sequence SSGQPDTQSESPPGSQTAT.

Strongly expressed in breast, liver, lung, skeletal muscle and kidney.

May be involved in the control of cytoskeleton formation by regulating actin polymerization. In Homo sapiens (Human), this protein is KN motif and ankyrin repeat domain-containing protein 3.